A 687-amino-acid chain; its full sequence is Chloride channel protein ClC-Kb (687 aa).

Residues 1–50 (MEEFVGLREGSSGNPVTLQELWGPCPRIRRGIRGGLEWLKQKLFRLGEDW) lie on the Cytoplasmic side of the membrane. Transmembrane regions (helical) follow at residues 51–82 (YFLM…QWLY) and 91–111 (LRYL…SGFS). Residues 116–127 (PSSGGSGIPEVK) constitute an intramembrane region (helical). S121 contributes to the chloride binding site. Helical transmembrane passes span 141 to 160 (IKNF…CGST) and 161 to 180 (LFLG…AAYL). N193 is a glycosylation site (N-linked (GlcNAc...) asparagine). Positions 203-224 (AAAAVGVATVFAAPFSGVLFSI) form an intramembrane region, helical. Residues 236-255 (YWRGFFAATCGAFMFRLLAV) traverse the membrane as a helical segment. Residues E259, E261, D278, and E281 each coordinate Ca(2+). The next 2 membrane-spanning stretches (helical) occupy residues 282 to 310 (IFFF…FGFI) and 325 to 342 (PVYS…TYPP). The segment at residues 349–360 (ASRLSMKQHLDS) is an intramembrane region (helical). Helical transmembrane passes span 400–420 (GTLA…TTIP) and 421–440 (MPAG…GRLF). F426 is a chloride binding site. Positions 464 to 496 (GGYALAGAAAFSGAVTHTISTALLAFEVTGQIV) form an intramembrane region, helical. Residues 500–520 (PVLMAVLAANAIAQSCQPSFY) form a helical membrane-spanning segment. Residues 521-687 (DGTVIVKKLP…SNLTNPPAPK (167 aa)) lie on the Cytoplasmic side of the membrane. 2 CBS domains span residues 551-609 (MNHS…EPPS) and 626-684 (CPTE…TNPP).

This sequence belongs to the chloride channel (TC 2.A.49) family. CLCNKB subfamily. In terms of assembly, homodimer. Interacts with BSND. Post-translationally, N-glycosylated.

The protein resides in the basolateral cell membrane. The catalysed reaction is chloride(in) = chloride(out). It carries out the reaction iodide(out) = iodide(in). It catalyses the reaction nitrate(in) = nitrate(out). The enzyme catalyses bromide(in) = bromide(out). Its activity is regulated as follows. Activated by extracellular Ca(2+) and inhibited by extracellular acidic pH. Anion-selective channel permeable to small monovalent anions with ion selectivity for chloride &gt; bromide &gt; nitrate &gt; iodide. Forms a homodimeric channel where each subunit has its own ion conduction pathway. May conduct double-barreled currents controlled by two types of gates, two fast gates that control each subunit independently and a slow common gate that opens and shuts off both subunits simultaneously. Assembles with the regulatory subunit BSND/Barttin for sorting at the basolateral plasma membrane domain and functional switch to the ion conducting state. CLCNKB:BSND channels display mostly a linear current-voltage relationship controlled by common gate. Mediates chloride conductance along nephron segments, namely the thick ascending limb of Henle's loop, convoluted tubule and the collecting duct, contributing to the maintenance of systemic acid-base and electrolyte homeostasis. Conducts chloride currents in the stria vascularis of the inner ear to establish the endocochlear potential necessary for normal hearing. In Homo sapiens (Human), this protein is Chloride channel protein ClC-Kb.